Here is a 202-residue protein sequence, read N- to C-terminus: ATP-dependent Clp protease proteolytic subunit (202 aa).

The active-site Nucleophile is Ser106. His131 is an active-site residue.

Belongs to the peptidase S14 family. Fourteen ClpP subunits assemble into 2 heptameric rings which stack back to back to give a disk-like structure with a central cavity, resembling the structure of eukaryotic proteasomes.

The protein resides in the cytoplasm. The enzyme catalyses Hydrolysis of proteins to small peptides in the presence of ATP and magnesium. alpha-casein is the usual test substrate. In the absence of ATP, only oligopeptides shorter than five residues are hydrolyzed (such as succinyl-Leu-Tyr-|-NHMec, and Leu-Tyr-Leu-|-Tyr-Trp, in which cleavage of the -Tyr-|-Leu- and -Tyr-|-Trp bonds also occurs).. Cleaves peptides in various proteins in a process that requires ATP hydrolysis. Has a chymotrypsin-like activity. Plays a major role in the degradation of misfolded proteins. The chain is ATP-dependent Clp protease proteolytic subunit from Methylibium petroleiphilum (strain ATCC BAA-1232 / LMG 22953 / PM1).